We begin with the raw amino-acid sequence, 700 residues long: Polyphosphate kinase (700 aa).

Asn-45 is a binding site for ATP. The Mg(2+) site is built by Arg-373 and Arg-403. The region spanning 428–462 (PGMKIHAKLLLITRREEQGFVRYAHIGTGNFHERT) is the PLD phosphodiesterase 1 domain. His-433 functions as the Phosphohistidine intermediate in the catalytic mechanism. The ATP site is built by Tyr-466, Arg-562, and His-590. In terms of domain architecture, PLD phosphodiesterase 2 spans 585–615 (DRFLEHPRVLVVHNDGDPQVFISSADWMERN).

This sequence belongs to the polyphosphate kinase 1 (PPK1) family. Requires Mg(2+) as cofactor. Post-translationally, an intermediate of this reaction is the autophosphorylated ppk in which a phosphate is covalently linked to a histidine residue through a N-P bond.

It carries out the reaction [phosphate](n) + ATP = [phosphate](n+1) + ADP. Its function is as follows. Catalyzes the reversible transfer of the terminal phosphate of ATP to form a long-chain polyphosphate (polyP). This Vibrio vulnificus (strain CMCP6) protein is Polyphosphate kinase.